We begin with the raw amino-acid sequence, 134 residues long: Probable glycine cleavage system H protein (134 aa).

In terms of domain architecture, Lipoyl-binding spans 29-110 (TVLVGISDYA…PYENWIAKLK (82 aa)). Lys70 is subject to N6-lipoyllysine.

Belongs to the GcvH family. The glycine cleavage system is composed of four proteins: P, T, L and H. Requires (R)-lipoate as cofactor.

The glycine cleavage system catalyzes the degradation of glycine. The H protein shuttles the methylamine group of glycine from the P protein to the T protein. This Thermococcus kodakarensis (strain ATCC BAA-918 / JCM 12380 / KOD1) (Pyrococcus kodakaraensis (strain KOD1)) protein is Probable glycine cleavage system H protein.